The sequence spans 244 residues: Ubiquitin carboxyl-terminal hydrolase mug105 (244 aa).

C42 acts as the Nucleophile in catalysis. Residue H165 is the Proton acceptor of the active site. D183 is an active-site residue.

The protein belongs to the peptidase C78 family. ZUFSP subfamily.

The protein resides in the cytoplasm. The catalysed reaction is Thiol-dependent hydrolysis of ester, thioester, amide, peptide and isopeptide bonds formed by the C-terminal Gly of ubiquitin (a 76-residue protein attached to proteins as an intracellular targeting signal).. Deubiquitinase with endodeubiquitinase activity that preferentially cleaves 'Lys-48'-linked polyubiquitin chains. Shows only weak activity against 'Lys-63' and 'Lys-11'-linked chains. Has a role in meiosis. This chain is Ubiquitin carboxyl-terminal hydrolase mug105 (mug105), found in Schizosaccharomyces pombe (strain 972 / ATCC 24843) (Fission yeast).